The following is a 306-amino-acid chain: Putative beta-lactamase HcpD (306 aa).

Positions 1–25 (MIKSWTKKWFLILFLMASCSSYLVA) are cleaved as a signal peptide. 4 TPR repeats span residues 28–61 (GEKY…RVGV), 96–133 (HLAC…KGGV), 168–205 (GISC…KDGA), and 240–277 (GSGC…GFSG). Intrachain disulfides connect C55/C63, C91/C99, C127/C135, C163/C171, C199/C207, C235/C243, and C271/C279.

This sequence belongs to the hcp beta-lactamase family.

It is found in the secreted. The enzyme catalyses a beta-lactam + H2O = a substituted beta-amino acid. In terms of biological role, may hydrolyze 6-aminopenicillinic acid and 7-aminocephalosporanic acid (ACA) derivatives. Binds to penicillin. In Helicobacter pylori (strain ATCC 700392 / 26695) (Campylobacter pylori), this protein is Putative beta-lactamase HcpD (hcpD).